The primary structure comprises 232 residues: Phosphoribosylformylglycinamidine synthase subunit PurQ (232 aa).

The Glutamine amidotransferase type-1 domain maps to Lys-2–Phe-232. The Nucleophile role is filled by Cys-86. Residues His-203 and Glu-205 contribute to the active site.

As to quaternary structure, part of the FGAM synthase complex composed of 1 PurL, 1 PurQ and 2 PurS subunits.

It is found in the cytoplasm. It carries out the reaction N(2)-formyl-N(1)-(5-phospho-beta-D-ribosyl)glycinamide + L-glutamine + ATP + H2O = 2-formamido-N(1)-(5-O-phospho-beta-D-ribosyl)acetamidine + L-glutamate + ADP + phosphate + H(+). It catalyses the reaction L-glutamine + H2O = L-glutamate + NH4(+). The protein operates within purine metabolism; IMP biosynthesis via de novo pathway; 5-amino-1-(5-phospho-D-ribosyl)imidazole from N(2)-formyl-N(1)-(5-phospho-D-ribosyl)glycinamide: step 1/2. Part of the phosphoribosylformylglycinamidine synthase complex involved in the purines biosynthetic pathway. Catalyzes the ATP-dependent conversion of formylglycinamide ribonucleotide (FGAR) and glutamine to yield formylglycinamidine ribonucleotide (FGAM) and glutamate. The FGAM synthase complex is composed of three subunits. PurQ produces an ammonia molecule by converting glutamine to glutamate. PurL transfers the ammonia molecule to FGAR to form FGAM in an ATP-dependent manner. PurS interacts with PurQ and PurL and is thought to assist in the transfer of the ammonia molecule from PurQ to PurL. The chain is Phosphoribosylformylglycinamidine synthase subunit PurQ from Methanosarcina acetivorans (strain ATCC 35395 / DSM 2834 / JCM 12185 / C2A).